The following is a 94-amino-acid chain: Cell division protein FtsB (94 aa).

Residues 1–3 (MRW) are Cytoplasmic-facing. Residues 4–21 (LTVGLLAAIGLLQYPLWV) traverse the membrane as a helical segment. The Periplasmic portion of the chain corresponds to 22–94 (GKGGWLKVWE…VQIPEKVPGK (73 aa)). Residues 31-73 (EYDRQLQQQKEVTRKLEIRNAGLDAEVRDLKQGYDAIEERARF) are a coiled coil.

It belongs to the FtsB family. In terms of assembly, part of a complex composed of FtsB, FtsL and FtsQ.

The protein localises to the cell inner membrane. Essential cell division protein. May link together the upstream cell division proteins, which are predominantly cytoplasmic, with the downstream cell division proteins, which are predominantly periplasmic. The sequence is that of Cell division protein FtsB from Dechloromonas aromatica (strain RCB).